The sequence spans 281 residues: Diaminopimelate epimerase (281 aa).

Substrate contacts are provided by Asn13, Gln46, and Asn66. The active-site Proton donor is Cys75. Residues 76–77 (GN), Asn160, Asn193, and 211–212 (ER) contribute to the substrate site. Cys220 acts as the Proton acceptor in catalysis. A substrate-binding site is contributed by 221 to 222 (GT).

It belongs to the diaminopimelate epimerase family. Homodimer.

The protein localises to the cytoplasm. It catalyses the reaction (2S,6S)-2,6-diaminopimelate = meso-2,6-diaminopimelate. Its pathway is amino-acid biosynthesis; L-lysine biosynthesis via DAP pathway; DL-2,6-diaminopimelate from LL-2,6-diaminopimelate: step 1/1. Its function is as follows. Catalyzes the stereoinversion of LL-2,6-diaminopimelate (L,L-DAP) to meso-diaminopimelate (meso-DAP), a precursor of L-lysine and an essential component of the bacterial peptidoglycan. The protein is Diaminopimelate epimerase of Acinetobacter baumannii (strain ATCC 17978 / DSM 105126 / CIP 53.77 / LMG 1025 / NCDC KC755 / 5377).